A 345-amino-acid polypeptide reads, in one-letter code: tRNA N6-adenosine threonylcarbamoyltransferase (345 aa).

Residues histidine 111 and histidine 115 each coordinate Fe cation. Residues 136–140 (LVSGG), aspartate 169, glycine 182, and asparagine 279 each bind substrate. Fe cation is bound at residue aspartate 307.

Belongs to the KAE1 / TsaD family. Requires Fe(2+) as cofactor.

The protein localises to the cytoplasm. The enzyme catalyses L-threonylcarbamoyladenylate + adenosine(37) in tRNA = N(6)-L-threonylcarbamoyladenosine(37) in tRNA + AMP + H(+). Functionally, required for the formation of a threonylcarbamoyl group on adenosine at position 37 (t(6)A37) in tRNAs that read codons beginning with adenine. Is involved in the transfer of the threonylcarbamoyl moiety of threonylcarbamoyl-AMP (TC-AMP) to the N6 group of A37, together with TsaE and TsaB. TsaD likely plays a direct catalytic role in this reaction. The chain is tRNA N6-adenosine threonylcarbamoyltransferase from Actinobacillus succinogenes (strain ATCC 55618 / DSM 22257 / CCUG 43843 / 130Z).